Reading from the N-terminus, the 143-residue chain is Antiholin-like protein LrgA (143 aa).

The next 4 membrane-spanning stretches (helical) occupy residues 6–26, 30–50, 61–81, and 97–117; these read VYSF…SNII, LPIP…LLCL, LGTA…ISVI, and VIVV…QFIL.

It belongs to the CidA/LrgA family. LrgA subfamily.

It localises to the cell membrane. Inhibits the expression or activity of extracellular murein hydrolases by interacting, possibly with LrgB, with the holin-like protein CidA. The LrgAB and CidA proteins may affect the proton motive force of the membrane. May be involved in programmed cell death (PCD), possibly triggering PCD in response to antibiotics and environmental stresses. In Bacillus anthracis (strain A0248), this protein is Antiholin-like protein LrgA.